Here is a 126-residue protein sequence, read N- to C-terminus: Small ribosomal subunit protein uS13c (126 aa).

The segment at 97–126 is disordered; that stretch reads PLRGQRTRTNARTRRGGKKTVAGKKKAPRK. Over residues 101–126 the composition is skewed to basic residues; it reads QRTRTNARTRRGGKKTVAGKKKAPRK.

Belongs to the universal ribosomal protein uS13 family. As to quaternary structure, part of the 30S ribosomal subunit.

It is found in the plastid. It localises to the chloroplast. Located at the top of the head of the 30S subunit, it contacts several helices of the 16S rRNA. This Pyropia yezoensis (Susabi-nori) protein is Small ribosomal subunit protein uS13c.